Reading from the N-terminus, the 1199-residue chain is Ecdysone-induced protein 75B, isoforms C/D (1199 aa).

The tract at residues 130–182 (TTDGPTAVLQQQQPQQQMPQHFESLPHHHPQQEHQPQQQQQQHHLQHHPHPHV) is disordered. Composition is skewed to low complexity over residues 139-149 (QQQQPQQQMPQ) and 162-172 (EHQPQQQQQQH). The segment at residues 242–318 (TVLCRVCGDK…VGMSRDAVRF (77 aa)) is a DNA-binding region (nuclear receptor). NR C4-type zinc fingers lie at residues 245 to 265 (CRVC…CEGC) and 282 to 306 (CTKN…LKKC). One can recognise an NR LBD domain in the interval 352-600 (DQPRLLAAVL…QQMWSMEDGN (249 aa)). Disordered stretches follow at residues 624–665 (KSPL…SALA), 771–808 (LDSP…SVDD), 831–851 (VSVS…KRQI), 895–961 (AEAD…SSHS), 991–1104 (ENST…SNSA), and 1155–1188 (VTVT…NPGL). 5 stretches are compositionally biased toward low complexity: residues 641–653 (GSPS…GVSL), 792–804 (SSGG…SPRS), 831–845 (VSVS…STSS), 897–942 (ADAS…AQSQ), and 950–961 (SSPKASMASSHS). Polar residues-rich tracts occupy residues 993–1006 (STAA…VGNR) and 1018–1040 (AVQN…QRQQ). 3 stretches are compositionally biased toward low complexity: residues 1041–1077 (SVSP…SASS), 1086–1104 (STSN…SNSA), and 1159–1187 (ASNG…PNPG).

It belongs to the nuclear hormone receptor family. NR1 subfamily.

The protein resides in the nucleus. Implicated in the regulation of ecdysone-triggered gene hierarchies. Probably plays a key role in mediating the regulation of the larval molt by 20-OH-ecdysone. The sequence is that of Ecdysone-induced protein 75B, isoforms C/D (Eip75B) from Drosophila melanogaster (Fruit fly).